A 188-amino-acid chain; its full sequence is Potassium-transporting ATPase KdpC subunit (188 aa).

A helical transmembrane segment spans residues 13–33; the sequence is MTAIFWIGCGLAYPLIFTGFA.

It belongs to the KdpC family. As to quaternary structure, the system is composed of three essential subunits: KdpA, KdpB and KdpC.

Its subcellular location is the cell inner membrane. Its function is as follows. Part of the high-affinity ATP-driven potassium transport (or Kdp) system, which catalyzes the hydrolysis of ATP coupled with the electrogenic transport of potassium into the cytoplasm. This subunit acts as a catalytic chaperone that increases the ATP-binding affinity of the ATP-hydrolyzing subunit KdpB by the formation of a transient KdpB/KdpC/ATP ternary complex. The chain is Potassium-transporting ATPase KdpC subunit from Gloeobacter violaceus (strain ATCC 29082 / PCC 7421).